Here is a 169-residue protein sequence, read N- to C-terminus: ATP synthase subunit b (169 aa).

Residues 12 to 32 form a helical membrane-spanning segment; it reads PSVGLIFWKTVAFLIFLYILY. The interval 69–107 is disordered; sequence AENEEARREAEQKAQQILREARDSAEELREEEKAKTRRE. Residues 87 to 107 are compositionally biased toward basic and acidic residues; it reads REARDSAEELREEEKAKTRRE.

The protein belongs to the ATPase B chain family. As to quaternary structure, F-type ATPases have 2 components, F(1) - the catalytic core - and F(0) - the membrane proton channel. F(1) has five subunits: alpha(3), beta(3), gamma(1), delta(1), epsilon(1). F(0) has three main subunits: a(1), b(2) and c(10-14). The alpha and beta chains form an alternating ring which encloses part of the gamma chain. F(1) is attached to F(0) by a central stalk formed by the gamma and epsilon chains, while a peripheral stalk is formed by the delta and b chains.

The protein resides in the cell inner membrane. F(1)F(0) ATP synthase produces ATP from ADP in the presence of a proton or sodium gradient. F-type ATPases consist of two structural domains, F(1) containing the extramembraneous catalytic core and F(0) containing the membrane proton channel, linked together by a central stalk and a peripheral stalk. During catalysis, ATP synthesis in the catalytic domain of F(1) is coupled via a rotary mechanism of the central stalk subunits to proton translocation. Functionally, component of the F(0) channel, it forms part of the peripheral stalk, linking F(1) to F(0). The chain is ATP synthase subunit b from Salinibacter ruber (strain DSM 13855 / M31).